A 292-amino-acid chain; its full sequence is Claudin-23 (292 aa).

At 1-3 the chain is on the cytoplasmic side; that stretch reads MRT. A helical membrane pass occupies residues 4-24; the sequence is PVVMTLGMVLAPCGLLLNLTG. The Extracellular segment spans residues 25-81; sequence TLAPGWRLVKGFLNQPVDVELYQGLWDMCREQSSRERECGQTDQWGYFEAQPVLVAR. A helical transmembrane segment spans residues 82 to 102; sequence ALMVTSLAATVLGLLLASLGV. Residues 103–110 are Cytoplasmic-facing; it reads RCWQDEPN. Residues 111–131 traverse the membrane as a helical segment; that stretch reads FVLAGLSGVVLFVAGLLGLIP. The Extracellular segment spans residues 132–160; the sequence is VSWYNHFLGDRDVLPAPASPVTVQVSYSL. Residues 161–181 traverse the membrane as a helical segment; sequence VLGYLGSCLLLLGGFSLALSF. At 182–292 the chain is on the cytoplasmic side; that stretch reads APWCDERCRR…DSSLPCDSDL (111 aa). The tract at residues 222–292 is disordered; sequence KYYSDGQHRP…DSSLPCDSDL (71 aa). Residues 273–282 show a composition bias toward polar residues; it reads DAPSCSTHPC.

It belongs to the claudin family. In terms of tissue distribution, expressed in germinal center B-cells, placenta, stomach as well as in colon tumor.

Its subcellular location is the cell junction. The protein localises to the tight junction. The protein resides in the cell membrane. Functionally, plays a major role in tight junction-specific obliteration of the intercellular space, through calcium-independent cell-adhesion activity. This is Claudin-23 (CLDN23) from Homo sapiens (Human).